The primary structure comprises 355 residues: Heat-inducible transcription repressor HrcA (355 aa).

The protein belongs to the HrcA family.

Functionally, negative regulator of class I heat shock genes (grpE-dnaK-dnaJ and groELS operons). Prevents heat-shock induction of these operons. This chain is Heat-inducible transcription repressor HrcA, found in Nitratidesulfovibrio vulgaris (strain DSM 19637 / Miyazaki F) (Desulfovibrio vulgaris).